The following is a 428-amino-acid chain: Immunoglobulin superfamily member 11 (428 aa).

The signal sequence occupies residues methionine 1–serine 22. The Ig-like V-type domain occupies leucine 23–threonine 136. At leucine 23–serine 239 the chain is on the extracellular side. Disulfide bonds link cysteine 44–cysteine 120 and cysteine 165–cysteine 215. N-linked (GlcNAc...) asparagine glycosylation is present at asparagine 102. The Ig-like C2-type domain occupies proline 144 to serine 234. The helical transmembrane segment at valine 240 to leucine 260 threads the bilayer. Topologically, residues threonine 261–valine 428 are cytoplasmic. Arginine 375 carries the post-translational modification Omega-N-methylarginine.

Post-translationally, N-glycosylated.

It localises to the cell membrane. Functions as a cell adhesion molecule through homophilic interaction. Stimulates cell growth. This chain is Immunoglobulin superfamily member 11 (Igsf11), found in Rattus norvegicus (Rat).